Consider the following 334-residue polypeptide: Hydroxyproline O-arabinosyltransferase NOD3 (334 aa).

The helical; Signal-anchor transmembrane segment at 1 to 18 (LLMVLGFFFATYNLVSMI) threads the bilayer.

It belongs to the RDN family.

The protein resides in the golgi apparatus membrane. It catalyses the reaction trans-4-hydroxy-L-prolyl-[protein] + UDP-beta-L-arabinofuranose = O-(beta-L-arabinofuranosyl)-trans-4-hydroxy-L-prolyl-[protein] + UDP + H(+). Its function is as follows. Probable glycosyltransferase involved in the O-arabinosylation of several proteins including extensins and small signaling peptides. Catalyzes the transfer of the initial L-arabinose to the hydroxyl group of Hyp residues. Probably involved in the arabinosylation of CLAVATA3/ESR-related (CLE) signaling peptides that move from root to shoot, to interact with receptor kinase signaling that regulates nodulation. Involved in long distance nodulation signaling events. Involved in the autoregulation of nodulation (AON), a long distance systemic signaling from root to shoot and back again, which allows legumes to limit the number of root nodules formed based on available nitrogen and previous rhizobial colonization. In Pisum sativum (Garden pea), this protein is Hydroxyproline O-arabinosyltransferase NOD3.